A 621-amino-acid polypeptide reads, in one-letter code: Chaperone protein DnaK (621 aa).

Thr-175 bears the Phosphothreonine; by autocatalysis mark. Residues 499 to 516 (EAHEADDKKRKEDAETRN) show a composition bias toward basic and acidic residues. Disordered stretches follow at residues 499 to 520 (EAHE…NAEN) and 583 to 621 (AQQG…KDNK). Residues 583–602 (AQQGAEGAAGAADSGSANNG) are compositionally biased toward low complexity. The segment covering 603-621 (GDDDVVDAEVVDDDDKDNK) has biased composition (acidic residues).

The protein belongs to the heat shock protein 70 family.

Its function is as follows. Acts as a chaperone. The polypeptide is Chaperone protein DnaK (Bifidobacterium animalis subsp. lactis (strain AD011)).